A 345-amino-acid chain; its full sequence is MLRPAGLWRLCRRPWAARVPAENLGRREVTSGVSPRGSTSPRTLNIFDRDLKRKQKNWAARQPEPTKFDYLKEEVGSRIADRVYDIPRNFPLALDLGCGRGYIAQYLNKETIGKFFQADIAENALKNSSETEIPTVSVLADEEFLPFKENTFDLVVSSLSLHWVNDLPRALEQIHYILKPDGVFIGAMFGGDTLYELRCSLQLAETEREGGFSPHISPFTAVNDLGHLLGRAGFNTLTVDTDEIQVNYPGMFELMEDLQGMGESNCAWNRKALLHRDTMLAAAAVYREMYRNEDGSVPATYQIYYMIGWKYHESQARPAERGSATVSFGELGKINNLMPPGKKSQ.

The transit peptide at 1–36 (MLRPAGLWRLCRRPWAARVPAENLGRREVTSGVSPR) directs the protein to the mitochondrion.

It belongs to the methyltransferase superfamily. In terms of assembly, interacts with NDUFAF8, leading to stabilize NDUFAF5. Interacts with NDUFS7. Interacts with PYURF (via TRM112 domain); the interaction is direct and stabilizes NDUFAF5 protein.

The protein localises to the mitochondrion inner membrane. Functionally, arginine hydroxylase that mediates hydroxylation of 'Arg-111' of NDUFS7 and is involved in the assembly of mitochondrial NADH:ubiquinone oxidoreductase complex (complex I, MT-ND1) at early stages. May also have methyltransferase activity. This is Arginine-hydroxylase NDUFAF5, mitochondrial from Homo sapiens (Human).